Reading from the N-terminus, the 152-residue chain is Xanthine-guanine phosphoribosyltransferase (152 aa).

Residues 37 to 38, Arg69, and 88 to 96 each bind 5-phospho-alpha-D-ribose 1-diphosphate; these read RG and DDLVDTGGT. Arg69 is a binding site for GMP. Position 89 (Asp89) interacts with Mg(2+). Positions 92 and 135 each coordinate guanine. Residues Asp92 and Ile135 each contribute to the xanthine site. Residues 92–96 and 134–135 each bind GMP; these read DTGGT and WI.

The protein belongs to the purine/pyrimidine phosphoribosyltransferase family. XGPT subfamily. As to quaternary structure, homotetramer. Mg(2+) serves as cofactor.

It localises to the cell inner membrane. The enzyme catalyses GMP + diphosphate = guanine + 5-phospho-alpha-D-ribose 1-diphosphate. It catalyses the reaction XMP + diphosphate = xanthine + 5-phospho-alpha-D-ribose 1-diphosphate. The catalysed reaction is IMP + diphosphate = hypoxanthine + 5-phospho-alpha-D-ribose 1-diphosphate. It functions in the pathway purine metabolism; GMP biosynthesis via salvage pathway; GMP from guanine: step 1/1. The protein operates within purine metabolism; XMP biosynthesis via salvage pathway; XMP from xanthine: step 1/1. Purine salvage pathway enzyme that catalyzes the transfer of the ribosyl-5-phosphate group from 5-phospho-alpha-D-ribose 1-diphosphate (PRPP) to the N9 position of the 6-oxopurines guanine and xanthine to form the corresponding ribonucleotides GMP (guanosine 5'-monophosphate) and XMP (xanthosine 5'-monophosphate), with the release of PPi. To a lesser extent, also acts on hypoxanthine. The polypeptide is Xanthine-guanine phosphoribosyltransferase (Shigella boydii serotype 18 (strain CDC 3083-94 / BS512)).